Reading from the N-terminus, the 395-residue chain is S-adenosylmethionine synthase 3 (395 aa).

Glu10 contacts Mg(2+). His16 contributes to the ATP binding site. A K(+)-binding site is contributed by Glu44. 2 residues coordinate L-methionine: Glu57 and Gln100. ATP is bound by residues 168–170 (DGK), 236–239 (SGRF), Asp247, 253–254 (RK), Ala270, Lys274, and Lys278. Asp247 lines the L-methionine pocket. Position 278 (Lys278) interacts with L-methionine.

Belongs to the AdoMet synthase family. As to quaternary structure, homotetramer. Mn(2+) is required as a cofactor. It depends on Mg(2+) as a cofactor. Requires Co(2+) as cofactor. K(+) serves as cofactor.

Its subcellular location is the cytoplasm. It catalyses the reaction L-methionine + ATP + H2O = S-adenosyl-L-methionine + phosphate + diphosphate. It functions in the pathway amino-acid biosynthesis; S-adenosyl-L-methionine biosynthesis; S-adenosyl-L-methionine from L-methionine: step 1/1. Functionally, catalyzes the formation of S-adenosylmethionine from methionine and ATP. The reaction comprises two steps that are both catalyzed by the same enzyme: formation of S-adenosylmethionine (AdoMet) and triphosphate, and subsequent hydrolysis of the triphosphate. The chain is S-adenosylmethionine synthase 3 (METK3) from Populus trichocarpa (Western balsam poplar).